The sequence spans 234 residues: LexA repressor (234 aa).

Residues 26–46 (FDEMKDALDLRSKSGIHRLIT) constitute a DNA-binding region (H-T-H motif). The tract at residues 80–107 (RGFTPSVIEGNLGKVRPPSPQHAEDDSD) is disordered. Active-site for autocatalytic cleavage activity residues include Ser-155 and Lys-193.

This sequence belongs to the peptidase S24 family. In terms of assembly, homodimer.

It catalyses the reaction Hydrolysis of Ala-|-Gly bond in repressor LexA.. Represses a number of genes involved in the response to DNA damage (SOS response), including recA and lexA. In the presence of single-stranded DNA, RecA interacts with LexA causing an autocatalytic cleavage which disrupts the DNA-binding part of LexA, leading to derepression of the SOS regulon and eventually DNA repair. The sequence is that of LexA repressor from Rhodopseudomonas palustris (strain HaA2).